The primary structure comprises 344 residues: UDP-3-O-acylglucosamine N-acyltransferase (344 aa).

H244 serves as the catalytic Proton acceptor.

Belongs to the transferase hexapeptide repeat family. LpxD subfamily. Homotrimer.

The catalysed reaction is a UDP-3-O-[(3R)-3-hydroxyacyl]-alpha-D-glucosamine + a (3R)-hydroxyacyl-[ACP] = a UDP-2-N,3-O-bis[(3R)-3-hydroxyacyl]-alpha-D-glucosamine + holo-[ACP] + H(+). It functions in the pathway bacterial outer membrane biogenesis; LPS lipid A biosynthesis. Its function is as follows. Catalyzes the N-acylation of UDP-3-O-acylglucosamine using 3-hydroxyacyl-ACP as the acyl donor. Is involved in the biosynthesis of lipid A, a phosphorylated glycolipid that anchors the lipopolysaccharide to the outer membrane of the cell. In Pseudoalteromonas atlantica (strain T6c / ATCC BAA-1087), this protein is UDP-3-O-acylglucosamine N-acyltransferase.